The chain runs to 186 residues: Elongation factor P (186 aa).

It belongs to the elongation factor P family.

The protein resides in the cytoplasm. It participates in protein biosynthesis; polypeptide chain elongation. Its function is as follows. Involved in peptide bond synthesis. Stimulates efficient translation and peptide-bond synthesis on native or reconstituted 70S ribosomes in vitro. Probably functions indirectly by altering the affinity of the ribosome for aminoacyl-tRNA, thus increasing their reactivity as acceptors for peptidyl transferase. The polypeptide is Elongation factor P (Prochlorococcus marinus (strain MIT 9313)).